The chain runs to 70 residues: Small integral membrane protein 42 (70 aa).

Residues 26–46 (LVNVLFFFTPLMTLVTLLILV) traverse the membrane as a helical segment.

The protein localises to the membrane. The polypeptide is Small integral membrane protein 42 (Homo sapiens (Human)).